Consider the following 347-residue polypeptide: GMP reductase (347 aa).

An NADP(+)-binding site is contributed by 108–131 (ADFEKTVQILALNPALNFVCIDVA). Residues Gly-181 and Gly-183 each contribute to the K(+) site. Catalysis depends on Cys-186, which acts as the Thioimidate intermediate. Residue 216-239 (IVSDGGCTMPGDVAKAFGGGADFV) participates in NADP(+) binding.

The protein belongs to the IMPDH/GMPR family. GuaC type 1 subfamily. As to quaternary structure, homotetramer.

It catalyses the reaction IMP + NH4(+) + NADP(+) = GMP + NADPH + 2 H(+). In terms of biological role, catalyzes the irreversible NADPH-dependent deamination of GMP to IMP. It functions in the conversion of nucleobase, nucleoside and nucleotide derivatives of G to A nucleotides, and in maintaining the intracellular balance of A and G nucleotides. In Salmonella typhi, this protein is GMP reductase.